A 1178-amino-acid chain; its full sequence is Pyruvate carboxylase, mitochondrial (1178 aa).

The transit peptide at 1–20 directs the protein to the mitochondrion; sequence MLKFQTVRGGLRLLGVRRSS. Residues lysine 35 and lysine 39 each carry the N6-acetyllysine modification. Residues 36–486 form the Biotin carboxylation domain; it reads PIKKVMVANR…DTQFIDENPE (451 aa). An N6-acetyllysine; alternate modification is found at lysine 79. Lysine 79 is modified (N6-succinyllysine; alternate). N6-acetyllysine is present on residues lysine 148 and lysine 152. Residues lysine 152 and glutamate 236 each contribute to the ATP site. The ATP-grasp domain maps to 156-353; it reads RAIAIAAGVP…LVHAQIHVSE (198 aa). Position 241 is an N6-acetyllysine (lysine 241). Residue histidine 271 participates in ATP binding. N6-acetyllysine occurs at positions 297, 316, and 319. The active site involves arginine 328. Lysine 434 bears the N6-acetyllysine mark. Lysine 442 bears the N6-succinyllysine mark. Residues 563–832 enclose the Pyruvate carboxyltransferase domain; the sequence is LLLMDTTFRD…DTEVPLERVF (270 aa). Position 571–575 (571–575) interacts with substrate; it reads RDAHQ. Residue aspartate 572 participates in Mn(2+) binding. At lysine 589 the chain carries N6-acetyllysine. Arginine 644 serves as a coordination point for substrate. Lysine 661 and lysine 717 each carry N6-acetyllysine. Lysine 741 provides a ligand contact to Mn(2+). Lysine 741 is modified (N6-carboxylysine). The residue at position 748 (lysine 748) is an N6-acetyllysine. The Mn(2+) site is built by histidine 771 and histidine 773. Lysine 892 is modified (N6-acetyllysine). Threonine 908 is a binding site for substrate. An N6-acetyllysine modification is found at lysine 969. An N6-acetyllysine; alternate modification is found at lysine 988. The residue at position 988 (lysine 988) is an N6-succinyllysine; alternate. Lysine 992 carries the N6-acetyllysine modification. The residue at position 1003 (threonine 1003) is a Phosphothreonine. Lysine 1061, lysine 1090, and lysine 1124 each carry N6-acetyllysine. The 70-residue stretch at 1109-1178 folds into the Biotinyl-binding domain; it reads KGQIGAPMPG…EGDDLILEIE (70 aa). Lysine 1144 carries the post-translational modification N6-biotinyllysine.

In terms of assembly, homotetramer. Interacts (via the biotin carboxylation domain) with SIRT4. The cofactor is biotin. Mn(2+) is required as a cofactor. Acetylation of Lys-748 might play a role in catalytic activity regulation.

Its subcellular location is the mitochondrion matrix. It carries out the reaction hydrogencarbonate + pyruvate + ATP = oxaloacetate + ADP + phosphate + H(+). Its pathway is carbohydrate biosynthesis; gluconeogenesis. In terms of biological role, pyruvate carboxylase catalyzes a 2-step reaction, involving the ATP-dependent carboxylation of the covalently attached biotin in the first step and the transfer of the carboxyl group to pyruvate in the second. Catalyzes in a tissue specific manner, the initial reactions of glucose (liver, kidney) and lipid (adipose tissue, liver, brain) synthesis from pyruvate. This is Pyruvate carboxylase, mitochondrial (Pc) from Rattus norvegicus (Rat).